The chain runs to 129 residues: Follitropin subunit beta (129 aa).

The signal sequence occupies residues 1–20 (MKTAQFYVLFFCWKAIWCNG). Disulfide bonds link Cys-21–Cys-69, Cys-35–Cys-84, Cys-38–Cys-122, Cys-46–Cys-100, Cys-50–Cys-102, and Cys-105–Cys-112. N-linked (GlcNAc...) asparagine glycans are attached at residues Asn-25 and Asn-42.

This sequence belongs to the glycoprotein hormones subunit beta family. In terms of assembly, heterodimer. The active follitropin is a heterodimer composed of an alpha chain/CGA shared with other hormones and a unique beta chain/FSHB shown here.

It localises to the secreted. In terms of biological role, together with the alpha chain CGA constitutes follitropin, the follicle-stimulating hormone, and provides its biological specificity to the hormone heterodimer. Binds FSHR, a G protein-coupled receptor, on target cells to activate downstream signaling pathways. Follitropin is involved in follicle development and spermatogenesis in reproductive organs. The protein is Follitropin subunit beta (FSHB) of Trichosurus vulpecula (Brush-tailed possum).